The following is a 109-amino-acid chain: Iron-sulfur cluster assembly protein CyaY (109 aa).

It belongs to the frataxin family.

In terms of biological role, involved in iron-sulfur (Fe-S) cluster assembly. May act as a regulator of Fe-S biogenesis. This is Iron-sulfur cluster assembly protein CyaY from Bordetella pertussis (strain Tohama I / ATCC BAA-589 / NCTC 13251).